Consider the following 113-residue polypeptide: Flagellar hook-basal body complex protein FliE (113 aa).

Belongs to the FliE family.

It localises to the bacterial flagellum basal body. The chain is Flagellar hook-basal body complex protein FliE from Rhizobium leguminosarum bv. trifolii (strain WSM2304).